Here is a 376-residue protein sequence, read N- to C-terminus: Cytochrome b (376 aa).

4 helical membrane passes run 28 to 48 (YGFLLGIIFFIQIITGVFLAS), 72 to 94 (WCFRYMHATGASLVFLLTYLHIL), 107 to 127 (SWISGLILFMIFIVTAFVGYV), and 169 to 189 (FFVLHFILPFIGLCIVFIHIF). Heme b is bound by residues His78 and His92. 2 residues coordinate heme b: His173 and His187. Residue His192 participates in a ubiquinone binding. Transmembrane regions (helical) follow at residues 214–234 (LLSLDVKGFNNVIILFLIQSL), 274–294 (VPSKPAGLVIVLLSLQLLFLL), 317–337 (VPIIWFMCAFYALLWIGCQLP), and 340–360 (IFILYGRLFIVLFFCSGLFVL).

It belongs to the cytochrome b family. As to quaternary structure, the main subunits of complex b-c1 are: cytochrome b, cytochrome c1 and the Rieske protein. It depends on heme b as a cofactor.

It is found in the mitochondrion inner membrane. Component of the ubiquinol-cytochrome c reductase complex (complex III or cytochrome b-c1 complex) that is part of the mitochondrial respiratory chain. The b-c1 complex mediates electron transfer from ubiquinol to cytochrome c. Contributes to the generation of a proton gradient across the mitochondrial membrane that is then used for ATP synthesis. This chain is Cytochrome b (MT-CYB), found in Plasmodium falciparum.